A 350-amino-acid polypeptide reads, in one-letter code: Nicotinate-nucleotide--dimethylbenzimidazole phosphoribosyltransferase (350 aa).

Catalysis depends on glutamate 316, which acts as the Proton acceptor.

This sequence belongs to the CobT family.

It catalyses the reaction 5,6-dimethylbenzimidazole + nicotinate beta-D-ribonucleotide = alpha-ribazole 5'-phosphate + nicotinate + H(+). It participates in nucleoside biosynthesis; alpha-ribazole biosynthesis; alpha-ribazole from 5,6-dimethylbenzimidazole: step 1/2. In terms of biological role, catalyzes the synthesis of alpha-ribazole-5'-phosphate from nicotinate mononucleotide (NAMN) and 5,6-dimethylbenzimidazole (DMB). The sequence is that of Nicotinate-nucleotide--dimethylbenzimidazole phosphoribosyltransferase from Bradyrhizobium diazoefficiens (strain JCM 10833 / BCRC 13528 / IAM 13628 / NBRC 14792 / USDA 110).